A 491-amino-acid polypeptide reads, in one-letter code: Protein nucleotidyltransferase YdiU (491 aa).

8 residues coordinate ATP: G88, G90, R91, K111, D123, G124, R174, and R181. The Proton acceptor role is filled by D250. Mg(2+) is bound by residues N251 and D260. D260 is an ATP binding site.

The protein belongs to the SELO family. Requires Mg(2+) as cofactor. Mn(2+) is required as a cofactor.

The catalysed reaction is L-seryl-[protein] + ATP = 3-O-(5'-adenylyl)-L-seryl-[protein] + diphosphate. It catalyses the reaction L-threonyl-[protein] + ATP = 3-O-(5'-adenylyl)-L-threonyl-[protein] + diphosphate. The enzyme catalyses L-tyrosyl-[protein] + ATP = O-(5'-adenylyl)-L-tyrosyl-[protein] + diphosphate. It carries out the reaction L-histidyl-[protein] + UTP = N(tele)-(5'-uridylyl)-L-histidyl-[protein] + diphosphate. The catalysed reaction is L-seryl-[protein] + UTP = O-(5'-uridylyl)-L-seryl-[protein] + diphosphate. It catalyses the reaction L-tyrosyl-[protein] + UTP = O-(5'-uridylyl)-L-tyrosyl-[protein] + diphosphate. Its function is as follows. Nucleotidyltransferase involved in the post-translational modification of proteins. It can catalyze the addition of adenosine monophosphate (AMP) or uridine monophosphate (UMP) to a protein, resulting in modifications known as AMPylation and UMPylation. The protein is Protein nucleotidyltransferase YdiU of Rhodopseudomonas palustris (strain BisB18).